A 651-amino-acid polypeptide reads, in one-letter code: Mediator of RNA polymerase II transcription subunit 17 (651 aa).

The interval Gln51 to Glu83 is disordered.

The protein belongs to the Mediator complex subunit 17 family. As to quaternary structure, interacts with GATA1 and PPARG. Component of the Mediator complex, which is composed of MED1, MED4, MED6, MED7, MED8, MED9, MED10, MED11, MED12, MED13, MED13L, MED14, MED15, MED16, MED17, MED18, MED19, MED20, MED21, MED22, MED23, MED24, MED25, MED26, MED27, MED29, MED30, MED31, CCNC, CDK8 and CDC2L6/CDK11. The MED12, MED13, CCNC and CDK8 subunits form a distinct module termed the CDK8 module. Mediator containing the CDK8 module is less active than Mediator lacking this module in supporting transcriptional activation. Individual preparations of the Mediator complex lacking one or more distinct subunits have been variously termed ARC, CRSP, DRIP, PC2, SMCC and TRAP. Interacts with STAT2. As to expression, ubiquitous.

Its subcellular location is the nucleus. Functionally, component of the Mediator complex, a coactivator involved in the regulated transcription of nearly all RNA polymerase II-dependent genes. Mediator functions as a bridge to convey information from gene-specific regulatory proteins to the basal RNA polymerase II transcription machinery. Mediator is recruited to promoters by direct interactions with regulatory proteins and serves as a scaffold for the assembly of a functional preinitiation complex with RNA polymerase II and the general transcription factors. In Homo sapiens (Human), this protein is Mediator of RNA polymerase II transcription subunit 17 (MED17).